Here is a 739-residue protein sequence, read N- to C-terminus: Probable beta-glucosidase L (739 aa).

The signal sequence occupies residues 1-17 (MQTLFLSLLAAAVTVHA). Asn40 and Asn224 each carry an N-linked (GlcNAc...) asparagine glycan. The active site involves Asp252. An N-linked (GlcNAc...) asparagine glycan is attached at Asn398.

It belongs to the glycosyl hydrolase 3 family.

The protein localises to the secreted. It catalyses the reaction Hydrolysis of terminal, non-reducing beta-D-glucosyl residues with release of beta-D-glucose.. It functions in the pathway glycan metabolism; cellulose degradation. Beta-glucosidases are one of a number of cellulolytic enzymes involved in the degradation of cellulosic biomass. Catalyzes the last step releasing glucose from the inhibitory cellobiose. This Aspergillus fumigatus (strain ATCC MYA-4609 / CBS 101355 / FGSC A1100 / Af293) (Neosartorya fumigata) protein is Probable beta-glucosidase L (bglL).